We begin with the raw amino-acid sequence, 1049 residues long: Isoleucine--tRNA ligase (1049 aa).

The 'HIGH' region signature appears at 48-58; that stretch reads PYTTGRIHLGT. Residues 596 to 600 carry the 'KMSKS' region motif; it reads KMSKS. Lys599 contributes to the ATP binding site.

The protein belongs to the class-I aminoacyl-tRNA synthetase family. IleS type 2 subfamily. As to quaternary structure, monomer. The cofactor is Zn(2+).

The protein localises to the cytoplasm. The enzyme catalyses tRNA(Ile) + L-isoleucine + ATP = L-isoleucyl-tRNA(Ile) + AMP + diphosphate. In terms of biological role, catalyzes the attachment of isoleucine to tRNA(Ile). As IleRS can inadvertently accommodate and process structurally similar amino acids such as valine, to avoid such errors it has two additional distinct tRNA(Ile)-dependent editing activities. One activity is designated as 'pretransfer' editing and involves the hydrolysis of activated Val-AMP. The other activity is designated 'posttransfer' editing and involves deacylation of mischarged Val-tRNA(Ile). This is Isoleucine--tRNA ligase from Methanothrix thermoacetophila (strain DSM 6194 / JCM 14653 / NBRC 101360 / PT) (Methanosaeta thermophila).